Consider the following 218-residue polypeptide: GTP cyclohydrolase 1 (218 aa).

Residues cysteine 109, histidine 112, and cysteine 180 each coordinate Zn(2+).

It belongs to the GTP cyclohydrolase I family. In terms of assembly, toroid-shaped homodecamer, composed of two pentamers of five dimers.

The enzyme catalyses GTP + H2O = 7,8-dihydroneopterin 3'-triphosphate + formate + H(+). Its pathway is cofactor biosynthesis; 7,8-dihydroneopterin triphosphate biosynthesis; 7,8-dihydroneopterin triphosphate from GTP: step 1/1. In Haemophilus ducreyi (strain 35000HP / ATCC 700724), this protein is GTP cyclohydrolase 1.